The following is a 384-amino-acid chain: S-adenosylmethionine synthase (384 aa).

An ATP-binding site is contributed by His15. Asp17 contributes to the Mg(2+) binding site. Glu43 contributes to the K(+) binding site. Residues Glu56 and Gln99 each coordinate L-methionine. A flexible loop region spans residues 99 to 109 (QSPDINQGVDR). ATP-binding positions include 164–166 (DAK), 230–231 (RF), Asp239, 245–246 (RK), Ala262, and Lys266. Asp239 lines the L-methionine pocket. L-methionine is bound at residue Lys270.

It belongs to the AdoMet synthase family. In terms of assembly, homotetramer; dimer of dimers. Mg(2+) serves as cofactor. The cofactor is K(+).

The protein localises to the cytoplasm. The catalysed reaction is L-methionine + ATP + H2O = S-adenosyl-L-methionine + phosphate + diphosphate. It functions in the pathway amino-acid biosynthesis; S-adenosyl-L-methionine biosynthesis; S-adenosyl-L-methionine from L-methionine: step 1/1. In terms of biological role, catalyzes the formation of S-adenosylmethionine (AdoMet) from methionine and ATP. The overall synthetic reaction is composed of two sequential steps, AdoMet formation and the subsequent tripolyphosphate hydrolysis which occurs prior to release of AdoMet from the enzyme. This chain is S-adenosylmethionine synthase, found in Escherichia fergusonii (strain ATCC 35469 / DSM 13698 / CCUG 18766 / IAM 14443 / JCM 21226 / LMG 7866 / NBRC 102419 / NCTC 12128 / CDC 0568-73).